Consider the following 93-residue polypeptide: Alpha-defensin 7 (93 aa).

The first 19 residues, 1–19, serve as a signal peptide directing secretion; the sequence is MKTLILLSALVLLAFQVQA. A propeptide spanning residues 20–58 is cleaved from the precursor; it reads DPIQNTDEETKTEEQPGEDDQAVSVSFGDPEGSSLQEES. The tract at residues 22–56 is disordered; that stretch reads IQNTDEETKTEEQPGEDDQAVSVSFGDPEGSSLQE. Cystine bridges form between C64–C92, C66–C81, and C71–C91.

This sequence belongs to the alpha-defensin family. In terms of tissue distribution, paneth cells of the small bowel.

The protein localises to the secreted. Functionally, probably contributes to the antimicrobial barrier function of the small bowel mucosa. This Mus musculus (Mouse) protein is Alpha-defensin 7 (Defa7).